The chain runs to 260 residues: Thiazole synthase (260 aa).

The Schiff-base intermediate with DXP role is filled by Lys-96. 1-deoxy-D-xylulose 5-phosphate is bound by residues Gly-157, 184 to 185 (AG), and 206 to 207 (NT).

This sequence belongs to the ThiG family. Homotetramer. Forms heterodimers with either ThiH or ThiS.

It is found in the cytoplasm. It catalyses the reaction [ThiS sulfur-carrier protein]-C-terminal-Gly-aminoethanethioate + 2-iminoacetate + 1-deoxy-D-xylulose 5-phosphate = [ThiS sulfur-carrier protein]-C-terminal Gly-Gly + 2-[(2R,5Z)-2-carboxy-4-methylthiazol-5(2H)-ylidene]ethyl phosphate + 2 H2O + H(+). Its pathway is cofactor biosynthesis; thiamine diphosphate biosynthesis. Functionally, catalyzes the rearrangement of 1-deoxy-D-xylulose 5-phosphate (DXP) to produce the thiazole phosphate moiety of thiamine. Sulfur is provided by the thiocarboxylate moiety of the carrier protein ThiS. In vitro, sulfur can be provided by H(2)S. The polypeptide is Thiazole synthase (Rhodopseudomonas palustris (strain BisB18)).